The chain runs to 209 residues: Orotate phosphoribosyltransferase (209 aa).

5-phospho-alpha-D-ribose 1-diphosphate contacts are provided by residues arginine 96, lysine 100, histidine 102, and 122-130; that span reads EDLISTGKS. Serine 126 is a binding site for orotate.

The protein belongs to the purine/pyrimidine phosphoribosyltransferase family. PyrE subfamily. As to quaternary structure, homodimer. Mg(2+) serves as cofactor.

The enzyme catalyses orotidine 5'-phosphate + diphosphate = orotate + 5-phospho-alpha-D-ribose 1-diphosphate. It participates in pyrimidine metabolism; UMP biosynthesis via de novo pathway; UMP from orotate: step 1/2. Functionally, catalyzes the transfer of a ribosyl phosphate group from 5-phosphoribose 1-diphosphate to orotate, leading to the formation of orotidine monophosphate (OMP). In Coxiella burnetii (strain RSA 493 / Nine Mile phase I), this protein is Orotate phosphoribosyltransferase.